A 907-amino-acid polypeptide reads, in one-letter code: Alanine--tRNA ligase (907 aa).

4 residues coordinate Zn(2+): His602, His606, Cys706, and His710.

It belongs to the class-II aminoacyl-tRNA synthetase family. The cofactor is Zn(2+).

Its subcellular location is the cytoplasm. It catalyses the reaction tRNA(Ala) + L-alanine + ATP = L-alanyl-tRNA(Ala) + AMP + diphosphate. Functionally, catalyzes the attachment of alanine to tRNA(Ala) in a two-step reaction: alanine is first activated by ATP to form Ala-AMP and then transferred to the acceptor end of tRNA(Ala). Also edits incorrectly charged Ser-tRNA(Ala) and Gly-tRNA(Ala) via its editing domain. The sequence is that of Alanine--tRNA ligase from Thermofilum pendens (strain DSM 2475 / Hrk 5).